A 277-amino-acid polypeptide reads, in one-letter code: Digeranylgeranylglyceryl phosphate synthase (277 aa).

Transmembrane regions (helical) follow at residues 13–33 (PGNA…AGGL), 40–60 (AFAV…NDYF), 89–109 (VALF…AIAI), 143–163 (FLYG…LFAL), 199–219 (RSLY…PLPY), 220–240 (LLGL…CGLA), and 256–276 (WLKA…LAVV).

It belongs to the UbiA prenyltransferase family. DGGGP synthase subfamily. Requires Mg(2+) as cofactor.

It localises to the cell membrane. It carries out the reaction sn-3-O-(geranylgeranyl)glycerol 1-phosphate + (2E,6E,10E)-geranylgeranyl diphosphate = 2,3-bis-O-(geranylgeranyl)-sn-glycerol 1-phosphate + diphosphate. The protein operates within membrane lipid metabolism; glycerophospholipid metabolism. Prenyltransferase that catalyzes the transfer of the geranylgeranyl moiety of geranylgeranyl diphosphate (GGPP) to the C2 hydroxyl of (S)-3-O-geranylgeranylglyceryl phosphate (GGGP). This reaction is the second ether-bond-formation step in the biosynthesis of archaeal membrane lipids. The polypeptide is Digeranylgeranylglyceryl phosphate synthase (Natronomonas pharaonis (strain ATCC 35678 / DSM 2160 / CIP 103997 / JCM 8858 / NBRC 14720 / NCIMB 2260 / Gabara) (Halobacterium pharaonis)).